Reading from the N-terminus, the 263-residue chain is Cytochrome c oxidase subunit 3 (263 aa).

7 helical membrane passes run 7–27 (ITVL…KAHL), 44–64 (FSVG…VYSI), 78–98 (GMLS…WGIL), 120–140 (LILT…CLQF), 145–165 (GMSL…ECFA), 191–211 (VTGL…IYFI), and 241–261 (ITIL…YFFY).

It belongs to the cytochrome c oxidase subunit 3 family. Component of the cytochrome c oxidase (complex IV, CIV), a multisubunit enzyme composed of a catalytic core of 3 subunits and several supernumerary subunits. The complex exists as a monomer or a dimer and forms supercomplexes (SCs) in the inner mitochondrial membrane with ubiquinol-cytochrome c oxidoreductase (cytochrome b-c1 complex, complex III, CIII).

The protein localises to the mitochondrion inner membrane. It carries out the reaction 4 Fe(II)-[cytochrome c] + O2 + 8 H(+)(in) = 4 Fe(III)-[cytochrome c] + 2 H2O + 4 H(+)(out). Component of the cytochrome c oxidase, the last enzyme in the mitochondrial electron transport chain which drives oxidative phosphorylation. The respiratory chain contains 3 multisubunit complexes succinate dehydrogenase (complex II, CII), ubiquinol-cytochrome c oxidoreductase (cytochrome b-c1 complex, complex III, CIII) and cytochrome c oxidase (complex IV, CIV), that cooperate to transfer electrons derived from NADH and succinate to molecular oxygen, creating an electrochemical gradient over the inner membrane that drives transmembrane transport and the ATP synthase. Cytochrome c oxidase is the component of the respiratory chain that catalyzes the reduction of oxygen to water. Electrons originating from reduced cytochrome c in the intermembrane space (IMS) are transferred via the dinuclear copper A center (CU(A)) of subunit 2 and heme A of subunit 1 to the active site in subunit 1, a binuclear center (BNC) formed by heme A3 and copper B (CU(B)). The BNC reduces molecular oxygen to 2 water molecules using 4 electrons from cytochrome c in the IMS and 4 protons from the mitochondrial matrix. The chain is Cytochrome c oxidase subunit 3 (COIII) from Plasmodium vivax.